The following is a 389-amino-acid chain: Gustatory receptor 68a (389 aa).

At 1–42 (MKIYQDIYPISKPSQIFAILPFYSGDVDDGFRFGGLGRWYGR) the chain is on the cytoplasmic side. The chain crosses the membrane as a helical span at residues 43 to 63 (LVALIILIGSLTLGEDVLFAS). Residues 64–82 (KEYRLVASAQGDTEEINRT) lie on the Extracellular side of the membrane. A glycan (N-linked (GlcNAc...) asparagine) is linked at Asn80. The helical transmembrane segment at 83-103 (IETLLCIISYTMVVLSSVQNA) threads the bilayer. The Cytoplasmic portion of the chain corresponds to 104–133 (SRHFRTLHDIAKIDEYLLANGFRETYSCRN). The chain crosses the membrane as a helical span at residues 134 to 154 (LTILVTSAAGGVLAVAFYYIH). Residues 155 to 164 (YRSGIGAKRQ) lie on the Extracellular side of the membrane. The helical transmembrane segment at 165–185 (IILLLIYFLQLLYSTLLALYL) threads the bilayer. The Cytoplasmic segment spans residues 186 to 236 (RTLMMNLAQRIGFLNQKLDTFNLQDCGHMENWRELSNLIEVLCKFRYITEN). Residues 237–257 (INCVAGVSLLFYFGFSFYTVT) form a helical membrane-spanning segment. N-linked (GlcNAc...) asparagine glycosylation is present at Asn258. Residues 258–281 (NQSYLAFATLTAGSLSSKTEVADT) are Extracellular-facing. Residues 282 to 302 (IGLSCIWVLAETITMIVICSA) traverse the membrane as a helical segment. Residues 303-352 (CDGLASEVNGTAQILARIYGKSKQFQNLIDKFLTKSIKQDLQFTAYGFFS) lie on the Cytoplasmic side of the membrane. Residues 353 to 373 (IDNSTLFKIFSAVTTYLVILI) form a helical membrane-spanning segment. Residues 374–389 (QFKQLEDSKVEDISQA) are Extracellular-facing.

This sequence belongs to the insect chemoreceptor superfamily. Gustatory receptor (GR) family. Gr21a subfamily. In terms of tissue distribution, expressed in chemosensory neurons of about 20 male-specific gustatory bristles in the forelegs. No expression is seen in the mechanosensory neurons. In larvae, expressed in the ventral pharyngeal sense organ.

It localises to the cell membrane. In terms of biological role, dsx-dependent essential component of pheromone-driven courtship behavior. Recognizes a female pheromone involved in the second step (tapping step) of the courtship display which is essential for efficient execution of the entire courtship sequence and timely mating. Required for detection of the male sex pheromone CH503 which is transferred from males to females during mating and inhibits courtship behavior by other males. Gr68a-expressing neurons in the male foreleg relay signals to the suboesophageal zone (SEZ) and courtship suppression is mediated by the release of the neuropeptide tachykinin from a cluster of 8-10 neurons in the SEZ. The protein is Gustatory receptor 68a (Gr68a) of Drosophila melanogaster (Fruit fly).